The chain runs to 742 residues: Phosphoribosylformylglycinamidine synthase subunit PurL (742 aa).

Residue H53 is part of the active site. ATP-binding residues include Y56 and K95. E97 contributes to the Mg(2+) binding site. Substrate contacts are provided by residues 98–101 and R120; that span reads SHNH. The active-site Proton acceptor is the H99. Residue D121 coordinates Mg(2+). Q245 is a substrate binding site. D275 is a binding site for Mg(2+). 319-321 lines the substrate pocket; the sequence is ESQ. ATP-binding residues include D502 and G539. N540 contributes to the Mg(2+) binding site. Substrate is bound at residue S542.

The protein belongs to the FGAMS family. As to quaternary structure, monomer. Part of the FGAM synthase complex composed of 1 PurL, 1 PurQ and 2 PurS subunits.

It localises to the cytoplasm. It catalyses the reaction N(2)-formyl-N(1)-(5-phospho-beta-D-ribosyl)glycinamide + L-glutamine + ATP + H2O = 2-formamido-N(1)-(5-O-phospho-beta-D-ribosyl)acetamidine + L-glutamate + ADP + phosphate + H(+). It participates in purine metabolism; IMP biosynthesis via de novo pathway; 5-amino-1-(5-phospho-D-ribosyl)imidazole from N(2)-formyl-N(1)-(5-phospho-D-ribosyl)glycinamide: step 1/2. In terms of biological role, part of the phosphoribosylformylglycinamidine synthase complex involved in the purines biosynthetic pathway. Catalyzes the ATP-dependent conversion of formylglycinamide ribonucleotide (FGAR) and glutamine to yield formylglycinamidine ribonucleotide (FGAM) and glutamate. The FGAM synthase complex is composed of three subunits. PurQ produces an ammonia molecule by converting glutamine to glutamate. PurL transfers the ammonia molecule to FGAR to form FGAM in an ATP-dependent manner. PurS interacts with PurQ and PurL and is thought to assist in the transfer of the ammonia molecule from PurQ to PurL. In Lactobacillus acidophilus (strain ATCC 700396 / NCK56 / N2 / NCFM), this protein is Phosphoribosylformylglycinamidine synthase subunit PurL.